Here is a 402-residue protein sequence, read N- to C-terminus: Bacillibactin exporter (402 aa).

The next 11 helical transmembrane spans lie at 4–24, 39–59, 69–89, 104–124, 162–182, 212–232, 247–267, 278–298, 302–322, 342–362, and 368–388; these read IIAL…LIPV, VSLI…IAGY, ILLP…FAST, LQGI…GDLF, FVPF…VLFL, WLYT…GVLF, VAKG…SFIA, MKFC…ALWW, FYFL…ALPA, FYNS…AALM, and IIFI…LFTV.

The protein belongs to the major facilitator superfamily.

The protein resides in the cell membrane. Involved in secretion of bacillibactin. The sequence is that of Bacillibactin exporter (ymfD) from Bacillus subtilis (strain 168).